A 462-amino-acid polypeptide reads, in one-letter code: Fumarate hydratase class II (462 aa).

Residues 98–100, arginine 126, 129–132, 139–141, and threonine 187 contribute to the substrate site; these read SGT, HPND, and SSN. The disordered stretch occupies residues 120 to 141; that stretch reads GTRGKGRKVHPNDHVNKGQSSN. Histidine 188 functions as the Proton donor/acceptor in the catalytic mechanism. The active site involves serine 318. Substrate-binding positions include serine 319 and 324–326; that span reads KVN.

The protein belongs to the class-II fumarase/aspartase family. Fumarase subfamily. Homotetramer.

The protein localises to the cytoplasm. It catalyses the reaction (S)-malate = fumarate + H2O. It participates in carbohydrate metabolism; tricarboxylic acid cycle; (S)-malate from fumarate: step 1/1. In terms of biological role, involved in the TCA cycle. Catalyzes the stereospecific interconversion of fumarate to L-malate. This is Fumarate hydratase class II from Nitrosomonas europaea (strain ATCC 19718 / CIP 103999 / KCTC 2705 / NBRC 14298).